The following is a 258-amino-acid chain: MKSACLIILASLVVCNLTLARGQGIPAEEETGDRQTIDDIILQRAESLLLRSILKNIGDEDGANEGLTSQPEWLVKRQHPGKRYQEELEKRQHPGKREEDEDEDYDEVQKRQHPGKREDEFDSFVELQRRQHPGKRLILEQITENPAFLSELSKRQHPGKRYVMYYSKRQHPGRREVDDESDAGDLRELEKRQHPGKRYLDNTSPDLGANSPCDVLDPGCSKANLLLQLLDNVNKSRAEKRQHPGKRSAPVEDLTEQE.

The first 22 residues, 1–22 (MKSACLIILASLVVCNLTLARG), serve as a signal peptide directing secretion. Gln-78 bears the Pyrrolidone carboxylic acid mark. Pro-80 bears the Proline amide mark. Composition is skewed to basic and acidic residues over residues 84–98 (YQEE…GKRE) and 107–119 (EVQK…KRED). The segment at 84 to 124 (YQEELEKRQHPGKREEDEDEDYDEVQKRQHPGKREDEFDSF) is disordered. Gln-92 is modified (pyrrolidone carboxylic acid). A Proline amide modification is found at Pro-94. Gln-112 bears the Pyrrolidone carboxylic acid mark. At Pro-114 the chain carries Proline amide. The residue at position 131 (Gln-131) is a Pyrrolidone carboxylic acid. At Pro-133 the chain carries Proline amide. At Gln-156 the chain carries Pyrrolidone carboxylic acid. At Pro-158 the chain carries Proline amide. 2 disordered regions span residues 166–215 (YSKR…PCDV) and 236–258 (SRAE…TEQE). Position 170 is a pyrrolidone carboxylic acid (Gln-170). Residue Pro-172 is modified to Proline amide. A compositionally biased stretch (basic and acidic residues) spans 184-193 (GDLRELEKRQ). Gln-193 carries the pyrrolidone carboxylic acid modification. Residue Pro-195 is modified to Proline amide. Position 242 is a pyrrolidone carboxylic acid (Gln-242). Pro-244 carries the post-translational modification Proline amide.

It belongs to the TRH family.

The protein resides in the secreted. Its function is as follows. Functions as a regulator of the biosynthesis of TSH in the anterior pituitary gland and as a neurotransmitter/ neuromodulator in the central and peripheral nervous systems. This Oncorhynchus nerka (Sockeye salmon) protein is Pro-thyrotropin-releasing hormone-A (trha).